We begin with the raw amino-acid sequence, 411 residues long: Carbohydrate sulfotransferase 1 (411 aa).

Residues 1-2 lie on the Cytoplasmic side of the membrane; that stretch reads MQ. A helical; Signal-anchor for type II membrane protein transmembrane segment spans residues 3-23; that stretch reads CSWKAVLLLALASIAIQYTAI. The Lumenal segment spans residues 24–411; it reads RTFTAKSFHT…VEERDFRPFL (388 aa). An N-linked (GlcNAc...) asparagine glycan is attached at Asn56. Residue 69-75 participates in 3'-phosphoadenylyl sulfate binding; sequence TRSGSSF. 2 N-linked (GlcNAc...) asparagine glycosylation sites follow: Asn145 and Asn189. 234–242 contacts 3'-phosphoadenylyl sulfate; it reads RDPRGILAS. Asn334 is a glycosylation site (N-linked (GlcNAc...) asparagine). Residues 337–339 carry the Cell attachment site motif; it reads RGD.

Belongs to the sulfotransferase 1 family. Gal/GlcNAc/GalNAc subfamily. In terms of tissue distribution, broadly expressed with highest levels in central nervous system. Expressed in cortex (at protein level). Expressed in high endothelial venules in peripheral lymph nodes, mesenteric lymph nodes and Peyer's patches.

The protein resides in the golgi apparatus membrane. It catalyses the reaction 3'-phosphoadenylyl sulfate + keratan = adenosine 3',5'-bisphosphate + keratan 6'-sulfate.. The protein operates within glycan metabolism. Functionally, sulfotransferase that utilizes 3'-phospho-5'-adenylyl sulfate (PAPS) as sulfonate donor to catalyze the transfer of sulfate to position 6 of internal galactose (Gal) residues of keratan. Cooperates with B4GALT4 and B3GNT7 glycosyltransferases and CHST6 sulfotransferase to construct and elongate disulfated disaccharide unit [-&gt;3(6-sulfoGalbeta)1-&gt;4(6-sulfoGlcNAcbeta)1-&gt;] within keratan sulfate polymer. Has a preference for sulfating keratan sulfate, but it also transfers sulfate to the unsulfated polymer. Involved in biosynthesis of phosphacan, a major keratan sulfate proteoglycan in the developing brain. Involved in biosynthesis of 6-sulfoGalbeta-containing O-linked glycans in high endothelial venules of lymph nodes. May act in a synergistic manner with CHST4 to generate sialyl 6',6-disulfo Lewis X motif, a recognition determinant for immune cell receptors implicated in leukocyte trafficking. Catalyzes sulfation of N-acetyllactosamine (LacNAc) oligosaccharides with highest efficiency for sialylated LacNAc structures. The chain is Carbohydrate sulfotransferase 1 (Chst1) from Mus musculus (Mouse).